The following is a 359-amino-acid chain: 5-formaminoimidazole-4-carboxamide-1-(beta)-D-ribofuranosyl 5'-monophosphate synthetase (359 aa).

The 5-amino-1-(5-phospho-beta-D-ribosyl)imidazole-4-carboxamide site is built by histidine 27 and serine 94. Positions 116–340 constitute an ATP-grasp domain; the sequence is RRLLRWESER…FGEIVTMGRR (225 aa). ATP-binding positions include 146–208 and glutamate 230; that span reads PEDI…TNFC. Asparagine 258 contributes to the 5-amino-1-(5-phospho-beta-D-ribosyl)imidazole-4-carboxamide binding site. Residues glutamine 297 and glutamate 310 each coordinate Mg(2+).

The protein belongs to the phosphohexose mutase family. It depends on Mg(2+) as a cofactor. Mn(2+) serves as cofactor.

It catalyses the reaction 5-amino-1-(5-phospho-beta-D-ribosyl)imidazole-4-carboxamide + formate + ATP = 5-formamido-1-(5-phospho-D-ribosyl)imidazole-4-carboxamide + ADP + phosphate. It functions in the pathway purine metabolism; IMP biosynthesis via de novo pathway; 5-formamido-1-(5-phospho-D-ribosyl)imidazole-4-carboxamide from 5-amino-1-(5-phospho-D-ribosyl)imidazole-4-carboxamide (formate route): step 1/1. Catalyzes the ATP- and formate-dependent formylation of 5-aminoimidazole-4-carboxamide-1-beta-d-ribofuranosyl 5'-monophosphate (AICAR) to 5-formaminoimidazole-4-carboxamide-1-beta-d-ribofuranosyl 5'-monophosphate (FAICAR) in the absence of folates. The sequence is that of 5-formaminoimidazole-4-carboxamide-1-(beta)-D-ribofuranosyl 5'-monophosphate synthetase from Methanopyrus kandleri (strain AV19 / DSM 6324 / JCM 9639 / NBRC 100938).